The primary structure comprises 168 residues: Photosystem I assembly protein Ycf3 (168 aa).

TPR repeat units lie at residues 35-68, 72-105, and 120-153; these read AFTY…EIDP, SYIL…NPFL, and GEQA…TPGN.

Belongs to the Ycf3 family.

The protein resides in the plastid. It is found in the chloroplast thylakoid membrane. Functionally, essential for the assembly of the photosystem I (PSI) complex. May act as a chaperone-like factor to guide the assembly of the PSI subunits. This Calycanthus floridus var. glaucus (Eastern sweetshrub) protein is Photosystem I assembly protein Ycf3.